Consider the following 126-residue polypeptide: Glycine cleavage system H protein (126 aa).

Residues 22 to 104 (TVTIGITEYA…YEKAWMVKVE (83 aa)) form the Lipoyl-binding domain. At K63 the chain carries N6-lipoyllysine.

It belongs to the GcvH family. As to quaternary structure, the glycine cleavage system is composed of four proteins: P, T, L and H. It depends on (R)-lipoate as a cofactor.

The glycine cleavage system catalyzes the degradation of glycine. The H protein shuttles the methylamine group of glycine from the P protein to the T protein. In terms of biological role, is also involved in protein lipoylation via its role as an octanoyl/lipoyl carrier protein intermediate. The polypeptide is Glycine cleavage system H protein (Staphylococcus haemolyticus (strain JCSC1435)).